Consider the following 132-residue polypeptide: MKKTPLLNVALSRVIAGMGHGDILVIGDAGLPVPPGVELIDLAITPGLPDFASVLRVVLSELQVERHVLAEEMQKVVPPALVEIERLKGKLGKREWLTHEDFKVLSRSARAVVRTGECQPYSNIALISGVTF.

Histidine 20 acts as the Proton donor in catalysis. Residues aspartate 28, histidine 99, and 121–123 (YSN) each bind substrate.

Belongs to the RbsD / FucU family. RbsD subfamily. Homodecamer.

It is found in the cytoplasm. The catalysed reaction is beta-D-ribopyranose = beta-D-ribofuranose. It functions in the pathway carbohydrate metabolism; D-ribose degradation; D-ribose 5-phosphate from beta-D-ribopyranose: step 1/2. Catalyzes the interconversion of beta-pyran and beta-furan forms of D-ribose. The chain is D-ribose pyranase from Pseudomonas putida (strain ATCC 47054 / DSM 6125 / CFBP 8728 / NCIMB 11950 / KT2440).